Reading from the N-terminus, the 273-residue chain is Flagellin FljO (273 aa).

The protein belongs to the bacterial flagellin family. In terms of assembly, in C.crescentus, the flagellar filament is composed of multiple flagellins of 29 kDa; 27 kDa and 25 kDa.

The protein localises to the secreted. It is found in the bacterial flagellum. Its function is as follows. Flagellin is the subunit protein which polymerizes to form the filaments of bacterial flagella. The chain is Flagellin FljO (fljO) from Caulobacter vibrioides (strain ATCC 19089 / CIP 103742 / CB 15) (Caulobacter crescentus).